The chain runs to 73 residues: DNA-directed RNA polymerase subunit omega (73 aa).

It belongs to the RNA polymerase subunit omega family. As to quaternary structure, the RNAP catalytic core consists of 2 alpha, 1 beta, 1 beta' and 1 omega subunit. When a sigma factor is associated with the core the holoenzyme is formed, which can initiate transcription.

It carries out the reaction RNA(n) + a ribonucleoside 5'-triphosphate = RNA(n+1) + diphosphate. Its function is as follows. Promotes RNA polymerase assembly. Latches the N- and C-terminal regions of the beta' subunit thereby facilitating its interaction with the beta and alpha subunits. The polypeptide is DNA-directed RNA polymerase subunit omega (Maridesulfovibrio salexigens (strain ATCC 14822 / DSM 2638 / NCIMB 8403 / VKM B-1763) (Desulfovibrio salexigens)).